Here is a 725-residue protein sequence, read N- to C-terminus: N-alpha-acetyltransferase 35, NatC auxiliary subunit (725 aa).

The segment at 548-573 (ERIMEEQQKGRSSKKTKKKKKVRPLS) is disordered. Positions 558–571 (RSSKKTKKKKKVRP) are enriched in basic residues.

It belongs to the MAK10 family. In terms of assembly, component of the N-terminal acetyltransferase C (NatC) complex.

It localises to the cytoplasm. Functionally, auxillary component of the N-terminal acetyltransferase C (NatC) complex which catalyzes acetylation of N-terminal methionine residues. N-terminal acetylation protects proteins from ubiquitination and degradation by the N-end rule pathway. This chain is N-alpha-acetyltransferase 35, NatC auxiliary subunit (NAA35), found in Gallus gallus (Chicken).